Consider the following 278-residue polypeptide: Large ribosomal subunit protein uL2 (278 aa).

The disordered stretch occupies residues glycine 222–arginine 278. The segment covering isoleucine 269–arginine 278 has biased composition (basic residues).

It belongs to the universal ribosomal protein uL2 family. Part of the 50S ribosomal subunit. Forms a bridge to the 30S subunit in the 70S ribosome.

One of the primary rRNA binding proteins. Required for association of the 30S and 50S subunits to form the 70S ribosome, for tRNA binding and peptide bond formation. It has been suggested to have peptidyltransferase activity; this is somewhat controversial. Makes several contacts with the 16S rRNA in the 70S ribosome. The chain is Large ribosomal subunit protein uL2 from Maricaulis maris (strain MCS10) (Caulobacter maris).